A 280-amino-acid polypeptide reads, in one-letter code: Elongation factor Ts (280 aa).

Positions 79 to 82 are involved in Mg(2+) ion dislocation from EF-Tu; the sequence is TDFV.

The protein belongs to the EF-Ts family.

It localises to the cytoplasm. Functionally, associates with the EF-Tu.GDP complex and induces the exchange of GDP to GTP. It remains bound to the aminoacyl-tRNA.EF-Tu.GTP complex up to the GTP hydrolysis stage on the ribosome. The sequence is that of Elongation factor Ts from Vibrio vulnificus (strain CMCP6).